We begin with the raw amino-acid sequence, 872 residues long: Alanine--tRNA ligase (872 aa).

Zn(2+) contacts are provided by H566, H570, C668, and H672.

This sequence belongs to the class-II aminoacyl-tRNA synthetase family. The cofactor is Zn(2+).

It is found in the cytoplasm. The enzyme catalyses tRNA(Ala) + L-alanine + ATP = L-alanyl-tRNA(Ala) + AMP + diphosphate. In terms of biological role, catalyzes the attachment of alanine to tRNA(Ala) in a two-step reaction: alanine is first activated by ATP to form Ala-AMP and then transferred to the acceptor end of tRNA(Ala). Also edits incorrectly charged Ser-tRNA(Ala) and Gly-tRNA(Ala) via its editing domain. This Lactococcus lactis subsp. cremoris (strain MG1363) protein is Alanine--tRNA ligase.